A 131-amino-acid chain; its full sequence is Phosphoribosyl-AMP cyclohydrolase (131 aa).

Asp-89 lines the Mg(2+) pocket. Cys-90 provides a ligand contact to Zn(2+). Mg(2+)-binding residues include Asp-91 and Asp-93. The Zn(2+) site is built by Cys-106 and Cys-113.

It belongs to the PRA-CH family. In terms of assembly, homodimer. The cofactor is Mg(2+). Requires Zn(2+) as cofactor.

It localises to the cytoplasm. The enzyme catalyses 1-(5-phospho-beta-D-ribosyl)-5'-AMP + H2O = 1-(5-phospho-beta-D-ribosyl)-5-[(5-phospho-beta-D-ribosylamino)methylideneamino]imidazole-4-carboxamide. It functions in the pathway amino-acid biosynthesis; L-histidine biosynthesis; L-histidine from 5-phospho-alpha-D-ribose 1-diphosphate: step 3/9. In terms of biological role, catalyzes the hydrolysis of the adenine ring of phosphoribosyl-AMP. The polypeptide is Phosphoribosyl-AMP cyclohydrolase (Bifidobacterium longum (strain DJO10A)).